A 355-amino-acid polypeptide reads, in one-letter code: Methylthioribose-1-phosphate isomerase (355 aa).

Substrate is bound by residues 50–52 (RGA), R93, and Q198. D239 (proton donor) is an active-site residue. Residue 249-250 (NK) coordinates substrate.

The protein belongs to the eIF-2B alpha/beta/delta subunits family. MtnA subfamily. As to quaternary structure, homodimer.

The enzyme catalyses 5-(methylsulfanyl)-alpha-D-ribose 1-phosphate = 5-(methylsulfanyl)-D-ribulose 1-phosphate. The protein operates within amino-acid biosynthesis; L-methionine biosynthesis via salvage pathway; L-methionine from S-methyl-5-thio-alpha-D-ribose 1-phosphate: step 1/6. In terms of biological role, catalyzes the interconversion of methylthioribose-1-phosphate (MTR-1-P) into methylthioribulose-1-phosphate (MTRu-1-P). This is Methylthioribose-1-phosphate isomerase from Geobacillus thermodenitrificans (strain NG80-2).